Consider the following 594-residue polypeptide: Beta-mannosyltransferase 3 (594 aa).

Residues 1–6 are Cytoplasmic-facing; sequence MRIRSN. A helical transmembrane segment spans residues 7–27; that stretch reads VLLLSTAGALALVWFAVVFSW. Residues 28-594 are Extracellular-facing; that stretch reads DDKSIFGIPT…KDEVKDTKAK (567 aa). The N-linked (GlcNAc...) asparagine glycan is linked to Asn305. Residues 512–594 adopt a coiled-coil conformation; it reads VTRGEEDRLK…KDEVKDTKAK (83 aa). Positions 517–558 are enriched in basic and acidic residues; that stretch reads EDRLKNKEKERKIEEKRKKEEERKKKEEEKKKKEEEEKKKKE. Residues 517-564 are disordered; it reads EDRLKNKEKERKIEEKRKKEEERKKKEEEKKKKEEEEKKKKEEEEEEE.

The protein belongs to the BMT family.

It localises to the membrane. Beta-mannosyltransferase involved in cell wall biosynthesis. The chain is Beta-mannosyltransferase 3 (BMT3) from Komagataella phaffii (strain ATCC 76273 / CBS 7435 / CECT 11047 / NRRL Y-11430 / Wegner 21-1) (Yeast).